The following is a 366-amino-acid chain: GDSL esterase/lipase LTL1 (366 aa).

The N-terminal stretch at 1 to 27 (MNINCSPLGFLISLFFIVTFLAPQVKS) is a signal peptide. Catalysis depends on S36, which acts as the Nucleophile. N117 carries N-linked (GlcNAc...) asparagine glycosylation. Catalysis depends on residues D326 and H329. A glycan (N-linked (GlcNAc...) asparagine) is linked at N354.

The protein belongs to the 'GDSL' lipolytic enzyme family. Binds to VLG at the endomembrane system. In terms of tissue distribution, mostly expressed in flowers, reproductive stems and rosette leaves, and, to a lower extent, in roots.

It is found in the secreted. Functionally, involved in the mechanisms of salt tolerance. Mediates resistance to LiCl and NaCl. This chain is GDSL esterase/lipase LTL1, found in Arabidopsis thaliana (Mouse-ear cress).